The chain runs to 102 residues: Co-chaperonin GroES (102 aa).

Belongs to the GroES chaperonin family. Heptamer of 7 subunits arranged in a ring. Interacts with the chaperonin GroEL.

It localises to the cytoplasm. In terms of biological role, together with the chaperonin GroEL, plays an essential role in assisting protein folding. The GroEL-GroES system forms a nano-cage that allows encapsulation of the non-native substrate proteins and provides a physical environment optimized to promote and accelerate protein folding. GroES binds to the apical surface of the GroEL ring, thereby capping the opening of the GroEL channel. The polypeptide is Co-chaperonin GroES (Chlamydia felis (strain Fe/C-56) (Chlamydophila felis)).